We begin with the raw amino-acid sequence, 360 residues long: G-protein coupled receptor 15 (360 aa).

Over 1-33 the chain is Extracellular; sequence MDPEETSVYLDYYYATSPNPDIRETHSHVPYTS. A helical transmembrane segment spans residues 34-54; sequence VFLPVFYIAVFLTGVLGNLVL. At 55 to 69 the chain is on the cytoplasmic side; the sequence is MGALHFKPGSRRLID. A helical transmembrane segment spans residues 70–90; sequence IFIINLAASDFIFLVTLPLWV. The Extracellular portion of the chain corresponds to 91–120; the sequence is DKEASLGLWRTGSFLCKGSSYMISVNMHCS. The chain crosses the membrane as a helical span at residues 121–141; sequence VFLLTCMSVDRYLAIVCPVVS. Over 142-149 the chain is Cytoplasmic; it reads RKFRRTDC. A helical transmembrane segment spans residues 150-170; it reads AYVVCASIWFISCLLGLPTLL. Over 171–192 the chain is Extracellular; that stretch reads SRELTLIDDKPYCAEKKATPLK. A helical membrane pass occupies residues 193-213; that stretch reads LIWSLVALIFTFFVPLLSIVT. Over 214–239 the chain is Cytoplasmic; it reads CYCRIARKLCAHYQQSGKHNKKLKKS. Residues 240–260 form a helical membrane-spanning segment; the sequence is IKIIFIVVAAFLVSWLPFNTS. Residues 261 to 284 are Extracellular-facing; it reads KLLAIVSGLQQERYFPSAILQLGM. The helical transmembrane segment at 285–305 threads the bilayer; it reads EVSGPLAFANSCVNPFIYYIF. The Cytoplasmic portion of the chain corresponds to 306-360; that stretch reads DSYIRRAIVHCLCPCLKNYDFGSSTETSDSHLTKALSTFIHAEDFTRRRKRSVSL. Ser359 carries the phosphoserine modification.

Belongs to the G-protein coupled receptor 1 family. In terms of assembly, interacts with adapter YWHAE; this interaction promotes ER-to-Golgi transport of GPR15. Post-translationally, phosphorylation is necessary for YWHAE binding and efficient surface expression. In terms of processing, O-glycosylated. Sialylated O-glycans in the N-terminal tail inhibits binding of GPR15LG. Sulfation is required for efficient binding of GPR15LG.

The protein localises to the cell membrane. In terms of biological role, g protein-coupled receptor that plays an important role in immune homeostasis. Acts via its natural ligand GPR15LG, a chemokine-like polypeptide strongly expressed in gastrointestinal tissues. GPR15-GPR15LG signaling axis regulates intestinal homeostasis and inflammation through the migration of immune cells. Controls thereby the specific homing of T-cells, particularly FOXP3+ regulatory T-cells (Tregs), to the large intestine lamina propria. Also required for skin localization of thymus-derived dendritic epidermal T-cells. Plays an important role in mediating cytoprotective function as well as angiogenesis of thrombomodulin. Mechanistically, preferentially signals through the Gi/o pathway to inhibit adenylate cyclase activity and activate a phosphatidylinositol-calcium second messenger system that regulates the release of Ca(2+) ions from intracellular stores. The chain is G-protein coupled receptor 15 (GPR15) from Chlorocebus aethiops (Green monkey).